A 778-amino-acid polypeptide reads, in one-letter code: Ribosome biogenesis protein BOP1 homolog (778 aa).

Residues 1-10 show a composition bias toward basic residues; that stretch reads MAKKQDRKRK. Residues 1–152 are disordered; the sequence is MAKKQDRKRK…DSDTSDEEDI (152 aa). Composition is skewed to acidic residues over residues 44-53, 60-72, and 84-105; these read EDSTDDEGID, SSED…DEEG, and SSDE…DEEE. A compositionally biased stretch (polar residues) spans 114-124; that stretch reads TTSSKAETNNE. The segment covering 142–151 has biased composition (acidic residues); the sequence is EDSDTSDEED. WD repeat units follow at residues 438–479, 481–519, 564–606, 609–647, 650–689, 693–732, and 748–778; these read GHTD…RTIE, EDVV…KLLI, NHFK…SQIP, KSKG…LIKK, TNSK…KPYQ, LHRN…DLLQ, and RDDF…RLYT.

Belongs to the WD repeat BOP1/ERB1 family.

Its subcellular location is the nucleus. It localises to the nucleolus. It is found in the nucleoplasm. Functionally, required for maturation of ribosomal RNAs and formation of the large ribosomal subunit. In Drosophila willistoni (Fruit fly), this protein is Ribosome biogenesis protein BOP1 homolog.